Consider the following 68-residue polypeptide: Sec-independent protein translocase protein TatA (68 aa).

A helical transmembrane segment spans residues 1 to 21 (MGSLSIWHWLIVLLIVVLVFG). A disordered region spans residues 42 to 68 (GMNEGAKDGQPPAKDAGRIIDGEADKK). Over residues 56 to 68 (DAGRIIDGEADKK) the composition is skewed to basic and acidic residues.

This sequence belongs to the TatA/E family. In terms of assembly, the Tat system comprises two distinct complexes: a TatABC complex, containing multiple copies of TatA, TatB and TatC subunits, and a separate TatA complex, containing only TatA subunits. Substrates initially bind to the TatABC complex, which probably triggers association of the separate TatA complex to form the active translocon.

It is found in the cell inner membrane. Part of the twin-arginine translocation (Tat) system that transports large folded proteins containing a characteristic twin-arginine motif in their signal peptide across membranes. TatA could form the protein-conducting channel of the Tat system. This Chromobacterium violaceum (strain ATCC 12472 / DSM 30191 / JCM 1249 / CCUG 213 / NBRC 12614 / NCIMB 9131 / NCTC 9757 / MK) protein is Sec-independent protein translocase protein TatA.